Consider the following 728-residue polypeptide: 1,4-alpha-glucan branching enzyme GlgB (728 aa).

Catalysis depends on aspartate 405, which acts as the Nucleophile. Catalysis depends on glutamate 458, which acts as the Proton donor.

It belongs to the glycosyl hydrolase 13 family. GlgB subfamily. In terms of assembly, monomer.

The enzyme catalyses Transfers a segment of a (1-&gt;4)-alpha-D-glucan chain to a primary hydroxy group in a similar glucan chain.. Its pathway is glycan biosynthesis; glycogen biosynthesis. In terms of biological role, catalyzes the formation of the alpha-1,6-glucosidic linkages in glycogen by scission of a 1,4-alpha-linked oligosaccharide from growing alpha-1,4-glucan chains and the subsequent attachment of the oligosaccharide to the alpha-1,6 position. In Shigella flexneri serotype 5b (strain 8401), this protein is 1,4-alpha-glucan branching enzyme GlgB.